The primary structure comprises 21 residues: Outer membrane protein P2 (21 aa).

In terms of assembly, disulfide bond interactions within and between MOMP molecules and other components form high molecular-weight oligomers.

The protein localises to the cell outer membrane. Structural rigidity of the outer membrane of elementary bodies and porin forming, permitting diffusion of solutes through the intracellular reticulate body membrane. Binds carcinoembryonic antigen (CEA). This is Outer membrane protein P2 from Glaesserella parasuis (Haemophilus parasuis).